A 380-amino-acid chain; its full sequence is Alcohol dehydrogenase 1 (380 aa).

Cys-48, Thr-50, His-70, Cys-100, Cys-103, Cys-106, Cys-114, and Cys-178 together coordinate Zn(2+). Residues Thr-50 and His-70 each contribute to the an alcohol site. Thr-50 provides a ligand contact to NAD(+). NAD(+) contacts are provided by residues Gly-203–Gly-208, Asp-227, Arg-232, Thr-273, Val-296, Val-296–Val-298, Phe-323, and Arg-373.

It belongs to the zinc-containing alcohol dehydrogenase family. Homodimer. Homotetramer. It depends on Zn(2+) as a cofactor.

The protein resides in the cytoplasm. The catalysed reaction is a primary alcohol + NAD(+) = an aldehyde + NADH + H(+). It catalyses the reaction a secondary alcohol + NAD(+) = a ketone + NADH + H(+). The sequence is that of Alcohol dehydrogenase 1 (ADH1) from Solanum tuberosum (Potato).